Consider the following 66-residue polypeptide: Large ribosomal subunit protein uL29 (66 aa).

The protein belongs to the universal ribosomal protein uL29 family.

This Kosmotoga olearia (strain ATCC BAA-1733 / DSM 21960 / TBF 19.5.1) protein is Large ribosomal subunit protein uL29.